A 153-amino-acid chain; its full sequence is Pheromone-binding protein Gp-9 (153 aa).

The N-terminal stretch at methionine 1–alanine 19 is a signal peptide. Cystine bridges form between cysteine 37/cysteine 77, cysteine 73/cysteine 129, and cysteine 118/cysteine 138.

This sequence belongs to the PBP/GOBP family. As to quaternary structure, homodimer.

Its subcellular location is the secreted. Colony queen number, a major feature of social organization, is associated with worker genotype for Gp-9. Colonies are headed by either a single reproductive queen (monogyne form) or multiple queens (polygyne form). Differences in worker Gp-9 genotypes between social forms may cause differences in workers' abilities to recognize queens and regulate their numbers. This chain is Pheromone-binding protein Gp-9, found in Solenopsis sp. (strain B0-153) (Fire ant).